We begin with the raw amino-acid sequence, 137 residues long: Glutamyl-tRNA(Gln) amidotransferase subunit C, chloroplastic/mitochondrial (137 aa).

The protein belongs to the GatC family. In terms of assembly, subunit of the heterotrimeric GatCAB amidotransferase (AdT) complex, composed of A, B and C subunits.

The protein localises to the mitochondrion. Its subcellular location is the plastid. The protein resides in the chloroplast. The catalysed reaction is L-glutamyl-tRNA(Gln) + L-glutamine + ATP + H2O = L-glutaminyl-tRNA(Gln) + L-glutamate + ADP + phosphate + H(+). In terms of biological role, allows the formation of correctly charged Gln-tRNA(Gln) through the transamidation of misacylated Glu-tRNA(Gln) in chloroplasts and mitochondria. The reaction takes place in the presence of glutamine and ATP through an activated gamma-phospho-Glu-tRNA(Gln). The polypeptide is Glutamyl-tRNA(Gln) amidotransferase subunit C, chloroplastic/mitochondrial (Vitis vinifera (Grape)).